Consider the following 490-residue polypeptide: ATP synthase subunit beta (490 aa).

Residue G175–T182 coordinates ATP.

This sequence belongs to the ATPase alpha/beta chains family. In terms of assembly, F-type ATPases have 2 components, CF(1) - the catalytic core - and CF(0) - the membrane proton channel. CF(1) has five subunits: alpha(3), beta(3), gamma(1), delta(1), epsilon(1). CF(0) has three main subunits: a(1), b(2) and c(9-12). The alpha and beta chains form an alternating ring which encloses part of the gamma chain. CF(1) is attached to CF(0) by a central stalk formed by the gamma and epsilon chains, while a peripheral stalk is formed by the delta and b chains.

The protein resides in the cell membrane. The enzyme catalyses ATP + H2O + 4 H(+)(in) = ADP + phosphate + 5 H(+)(out). Produces ATP from ADP in the presence of a proton gradient across the membrane. The catalytic sites are hosted primarily by the beta subunits. The protein is ATP synthase subunit beta of Acidothermus cellulolyticus (strain ATCC 43068 / DSM 8971 / 11B).